The sequence spans 62 residues: uncharacterized protein (62 aa).

Residues 1-62 form a disordered region; it reads MSSTAEEMAA…SNGEAKRKEK (62 aa). Basic and acidic residues predominate over residues 28-37; it reads TKSDRVEHKH.

This is an uncharacterized protein from Caenorhabditis elegans.